A 62-amino-acid chain; its full sequence is UPF0291 protein CLD_1956 (62 aa).

The protein belongs to the UPF0291 family.

Its subcellular location is the cytoplasm. The chain is UPF0291 protein CLD_1956 from Clostridium botulinum (strain Okra / Type B1).